A 116-amino-acid polypeptide reads, in one-letter code: Large ribosomal subunit protein bL17 (116 aa).

The protein belongs to the bacterial ribosomal protein bL17 family. In terms of assembly, part of the 50S ribosomal subunit. Contacts protein L32.

This is Large ribosomal subunit protein bL17 from Fusobacterium nucleatum subsp. nucleatum (strain ATCC 25586 / DSM 15643 / BCRC 10681 / CIP 101130 / JCM 8532 / KCTC 2640 / LMG 13131 / VPI 4355).